Consider the following 422-residue polypeptide: Histone deacetylase B (422 aa).

Aspartate 102 is a substrate binding site. Catalysis depends on histidine 144, which acts as the Proton acceptor. Position 152 (glycine 152) interacts with substrate. Residues aspartate 179, histidine 181, and aspartate 268 each contribute to the a divalent metal cation site. Tyrosine 307 lines the substrate pocket. The segment at 399-422 (IDFDRDEDSKENMDKRKKKHNDFS) is disordered. Basic residues predominate over residues 413–422 (KRKKKHNDFS).

Belongs to the histone deacetylase family. HD type 1 subfamily.

It is found in the nucleus. The protein localises to the cytoplasm. It carries out the reaction N(6)-acetyl-L-lysyl-[histone] + H2O = L-lysyl-[histone] + acetate. Its activity is regulated as follows. Its activity is inhibited by trichostatin A (TSA), a well known histone deacetylase inhibitor. Cytosolic activity is refractory to inhibition by TSA, while the nuclear activity is inhibited completely. Its function is as follows. Responsible for the deacetylation of lysine residues on the N-terminal part of the core histones (H2A, H2B, H3 and H4). Histone deacetylation plays an important role in transcriptional regulation, cell cycle progression and developmental events. Histone deacetylases act via the formation of large multiprotein complexes. May play a role in the regulation of the timing of gene expression during the development and in the definition aspects of the phenotype that mediate social behavior in genetically heterogeneous groups. The sequence is that of Histone deacetylase B (hdaB) from Dictyostelium discoideum (Social amoeba).